The chain runs to 408 residues: LL-diaminopimelate aminotransferase (408 aa).

Residues Tyr15 and Gly42 each coordinate substrate. Pyridoxal 5'-phosphate contacts are provided by residues Tyr72, 108–109 (SK), Tyr132, Asn187, Tyr218, and 246–248 (SFS). Positions 109, 132, and 187 each coordinate substrate. Lys249 is subject to N6-(pyridoxal phosphate)lysine. Positions 257 and 292 each coordinate pyridoxal 5'-phosphate. Substrate-binding residues include Asn292 and Arg388.

The protein belongs to the class-I pyridoxal-phosphate-dependent aminotransferase family. LL-diaminopimelate aminotransferase subfamily. As to quaternary structure, homodimer. Requires pyridoxal 5'-phosphate as cofactor.

It catalyses the reaction (2S,6S)-2,6-diaminopimelate + 2-oxoglutarate = (S)-2,3,4,5-tetrahydrodipicolinate + L-glutamate + H2O + H(+). It participates in amino-acid biosynthesis; L-lysine biosynthesis via DAP pathway; LL-2,6-diaminopimelate from (S)-tetrahydrodipicolinate (aminotransferase route): step 1/1. Functionally, involved in the synthesis of meso-diaminopimelate (m-DAP or DL-DAP), required for both lysine and peptidoglycan biosynthesis. Catalyzes the direct conversion of tetrahydrodipicolinate to LL-diaminopimelate. The protein is LL-diaminopimelate aminotransferase of Prochlorococcus marinus (strain SARG / CCMP1375 / SS120).